A 506-amino-acid polypeptide reads, in one-letter code: Anaerobic nitric oxide reductase transcription regulator NorR (506 aa).

At Asp-57 the chain carries 4-aspartylphosphate. Positions Met-187–Val-416 constitute a Sigma-54 factor interaction domain. Residues Gly-215 to Glu-222 and Ala-278 to Glu-287 contribute to the ATP site. The H-T-H motif DNA-binding region spans Trp-481 to Lys-500.

The protein operates within nitrogen metabolism; nitric oxide reduction. In terms of biological role, required for the expression of anaerobic nitric oxide (NO) reductase, acts as a transcriptional activator for at least the norVW operon. Activation also requires sigma-54. The protein is Anaerobic nitric oxide reductase transcription regulator NorR of Salmonella arizonae (strain ATCC BAA-731 / CDC346-86 / RSK2980).